The following is an 89-amino-acid chain: Small ribosomal subunit protein uS15 (89 aa).

This sequence belongs to the universal ribosomal protein uS15 family. Part of the 30S ribosomal subunit. Forms a bridge to the 50S subunit in the 70S ribosome, contacting the 23S rRNA.

In terms of biological role, one of the primary rRNA binding proteins, it binds directly to 16S rRNA where it helps nucleate assembly of the platform of the 30S subunit by binding and bridging several RNA helices of the 16S rRNA. Functionally, forms an intersubunit bridge (bridge B4) with the 23S rRNA of the 50S subunit in the ribosome. This Magnetococcus marinus (strain ATCC BAA-1437 / JCM 17883 / MC-1) protein is Small ribosomal subunit protein uS15.